Consider the following 452-residue polypeptide: Sensor histidine kinase HprS (452 aa).

Residues 1–9 (MKRLSITVR) are Cytoplasmic-facing. The chain crosses the membrane as a helical span at residues 10–30 (LTLLFILLLSVAGAGIVWTLY). Residues 31–158 (NGLASELKWR…ARHNMLEQYK (128 aa)) lie on the Periplasmic side of the membrane. The chain crosses the membrane as a helical span at residues 159–179 (INSIIICIVAIVLCSVLSPLL). Over 180–452 (IRTGLREIKK…VFRITLPQRN (273 aa)) the chain is Cytoplasmic. Residues 181 to 234 (RTGLREIKKLSGVTEALNYNDSREPVEVSALPRELKPLGQALNKMHHALVKDFE) enclose the HAMP domain. Residues 242-452 (DLAHELRTPI…VFRITLPQRN (211 aa)) form the Histidine kinase domain. Position 245 is a phosphohistidine; by autocatalysis (His-245).

Autophosphorylated.

It localises to the cell inner membrane. It carries out the reaction ATP + protein L-histidine = ADP + protein N-phospho-L-histidine.. In terms of biological role, member of a two-component regulatory system HprR/HprS involved in response to hydrogen peroxide. Senses H(2)O(2), maybe via the redox state of the membrane. Activates HprR by phosphorylation. Can also phosphorylate CusR. This Escherichia coli (strain K12) protein is Sensor histidine kinase HprS.